A 130-amino-acid chain; its full sequence is Small ribosomal subunit protein uS9 (130 aa).

The segment covering 99–110 (KKAGFLTRDPRM) has biased composition (basic and acidic residues). Residues 99 to 130 (KKAGFLTRDPRMKERKKYGLKKARRAPQFSKR) are disordered. The segment covering 111–130 (KERKKYGLKKARRAPQFSKR) has biased composition (basic residues).

The protein belongs to the universal ribosomal protein uS9 family.

This is Small ribosomal subunit protein uS9 from Clostridium botulinum (strain Alaska E43 / Type E3).